The primary structure comprises 437 residues: U1 small nuclear ribonucleoprotein 70 kDa (437 aa).

Residue Thr-2 is modified to N-acetylthreonine. The disordered stretch occupies residues Phe-48–Gln-79. A compositionally biased stretch (basic and acidic residues) spans Ala-60–Gln-79. Residues His-92–Gly-202 are required for interaction with U1 RNA. Residues Lys-103–Gly-181 enclose the RRM domain. Lys-118 is modified (N6-acetyllysine). Residue Tyr-126 is modified to Phosphotyrosine. The segment at Trp-187–Glu-437 is disordered. Positions Leu-192–Arg-201 are enriched in gly residues. Over residues Asn-207–Arg-254 the composition is skewed to basic and acidic residues. Phosphoserine occurs at positions 226 and 268. Basic residues predominate over residues Arg-255–Ser-268. 2 stretches are compositionally biased toward basic and acidic residues: residues Arg-269–Arg-286 and Arg-294–Arg-310. A Phosphoserine modification is found at Ser-320. Over residues Pro-343–Arg-393 the composition is skewed to basic and acidic residues. Lys-346 is covalently cross-linked (Glycyl lysine isopeptide (Lys-Gly) (interchain with G-Cter in SUMO2)). A Phosphoserine modification is found at Ser-410.

Component of the U1 snRNP. The U1 snRNP is composed of the U1 snRNA and the 7 core Sm proteins SNRPB, SNRPD1, SNRPD2, SNRPD3, SNRPE, SNRPF and SNRPG that assemble in a heptameric protein ring on the Sm site of the small nuclear RNA to form the core snRNP, and at least three U1 snRNP-specific proteins SNRNP70/U1-70K, SNRPA/U1-A and SNRPC/U1-C. Interacts with SCNM1. Found in a pre-mRNA splicing complex with SFRS4, SFRS5, SNRNP70, SNRPA1, SRRM1 and SRRM2. Found in a pre-mRNA exonic splicing enhancer (ESE) complex with SNRNP70, SNRPA1, SRRM1 and TRA2B/SFRS10. Interacts with dephosphorylated SFRS13A and SFPQ. Interacts with NUDT21/CPSF5, CPSF6, SCAF11, and ZRANB2. Interacts with GEMIN5. Interacts with FUS. In terms of processing, the N-terminus is blocked. Post-translationally, extensively phosphorylated on serine residues in the C-terminal region.

The protein localises to the nucleus speckle. Its subcellular location is the nucleus. It localises to the nucleoplasm. Functionally, component of the spliceosomal U1 snRNP, which is essential for recognition of the pre-mRNA 5' splice-site and the subsequent assembly of the spliceosome. SNRNP70 binds to the loop I region of U1-snRNA. In terms of biological role, truncated isoforms that lack the RRM domain cannot bind U1-snRNA. This chain is U1 small nuclear ribonucleoprotein 70 kDa (SNRNP70), found in Homo sapiens (Human).